Here is a 116-residue protein sequence, read N- to C-terminus: Transcription elongation factor SPT4 homolog 1 (116 aa).

The segment at 19–39 adopts a C4-type zinc-finger fold; the sequence is CLRCRLVKTYDQFRDSGCENC.

It belongs to the SPT4 family.

It localises to the nucleus. In terms of biological role, may regulate transcription elongation by RNA polymerase II. May enhance transcriptional pausing at sites proximal to the promoter, which may in turn facilitate the assembly of an elongation competent RNA polymerase II complex. The sequence is that of Transcription elongation factor SPT4 homolog 1 from Arabidopsis thaliana (Mouse-ear cress).